The chain runs to 116 residues: Large ribosomal subunit protein bL20c (116 aa).

It belongs to the bacterial ribosomal protein bL20 family.

It is found in the plastid. It localises to the chloroplast. Binds directly to 23S ribosomal RNA and is necessary for the in vitro assembly process of the 50S ribosomal subunit. It is not involved in the protein synthesizing functions of that subunit. The chain is Large ribosomal subunit protein bL20c from Ipomoea purpurea (Common morning glory).